The primary structure comprises 702 residues: Vertnin (702 aa).

The segment at 562–625 is disordered; it reads VPTLGKGGQE…QGQPHSGPLL (64 aa). The segment covering 570 to 582 has biased composition (basic and acidic residues); the sequence is QEAEEKQEKEAGR.

Belongs to the vertnin family.

It localises to the nucleus. Acts as a transcription factor that regulates development of thoracic vertebrae. This Homo sapiens (Human) protein is Vertnin.